We begin with the raw amino-acid sequence, 710 residues long: DNA polymerase epsilon subunit B (710 aa).

The tract at residues Phe116 to Glu167 is disordered. The segment covering Asn121–Ser144 has biased composition (polar residues).

It belongs to the DNA polymerase epsilon subunit B family. As to quaternary structure, heterotetramer. Consists of four subunits: POL2, DPB2, DPB3 and DPB4.

The protein resides in the nucleus. In terms of biological role, as accessory component of the DNA polymerase epsilon (DNA polymerase II) participates in chromosomal DNA replication. This chain is DNA polymerase epsilon subunit B (DPB2), found in Kluyveromyces lactis (strain ATCC 8585 / CBS 2359 / DSM 70799 / NBRC 1267 / NRRL Y-1140 / WM37) (Yeast).